The following is a 334-amino-acid chain: Glyceraldehyde-3-phosphate dehydrogenase (334 aa).

Residues T12 to I13 and G111 contribute to the NAD(+) site. S140 to N142 contacts D-glyceraldehyde 3-phosphate. Residue C141 is the Nucleophile of the active site. R167 contributes to the NAD(+) binding site. Residue H192–G193 participates in D-glyceraldehyde 3-phosphate binding. Q298 provides a ligand contact to NAD(+).

It belongs to the glyceraldehyde-3-phosphate dehydrogenase family. In terms of assembly, homotetramer.

Its subcellular location is the cytoplasm. It catalyses the reaction D-glyceraldehyde 3-phosphate + phosphate + NADP(+) = (2R)-3-phospho-glyceroyl phosphate + NADPH + H(+). It carries out the reaction D-glyceraldehyde 3-phosphate + phosphate + NAD(+) = (2R)-3-phospho-glyceroyl phosphate + NADH + H(+). It participates in carbohydrate degradation; glycolysis; pyruvate from D-glyceraldehyde 3-phosphate: step 1/5. In Pyrococcus abyssi (strain GE5 / Orsay), this protein is Glyceraldehyde-3-phosphate dehydrogenase (gap).